Consider the following 256-residue polypeptide: Trans-aconitate 2-methyltransferase (256 aa).

Belongs to the methyltransferase superfamily. Tam family.

It is found in the cytoplasm. It catalyses the reaction trans-aconitate + S-adenosyl-L-methionine = (E)-3-(methoxycarbonyl)pent-2-enedioate + S-adenosyl-L-homocysteine. Catalyzes the S-adenosylmethionine monomethyl esterification of trans-aconitate. The polypeptide is Trans-aconitate 2-methyltransferase (Rhodopseudomonas palustris (strain BisB5)).